A 25-amino-acid polypeptide reads, in one-letter code: Small ribosomal subunit protein eS32 (25 aa).

Residues 1–25 (MRAKWRKKRMRRLKRKRRKMRQRSK) are disordered.

It belongs to the eukaryotic ribosomal protein eS32 family. As to quaternary structure, component of the large ribosomal subunit.

The protein localises to the cytoplasm. Component of the small ribosomal subunit. The ribosome is a large ribonucleoprotein complex responsible for the synthesis of proteins in the cell. The polypeptide is Small ribosomal subunit protein eS32 (rpl41) (Cyprinus carpio (Common carp)).